A 115-amino-acid chain; its full sequence is NAD(P)H-quinone oxidoreductase subunit M (115 aa).

The protein belongs to the complex I NdhM subunit family. As to quaternary structure, NDH-1 can be composed of about 15 different subunits; different subcomplexes with different compositions have been identified which probably have different functions.

Its subcellular location is the cellular thylakoid membrane. It catalyses the reaction a plastoquinone + NADH + (n+1) H(+)(in) = a plastoquinol + NAD(+) + n H(+)(out). The enzyme catalyses a plastoquinone + NADPH + (n+1) H(+)(in) = a plastoquinol + NADP(+) + n H(+)(out). Its function is as follows. NDH-1 shuttles electrons from an unknown electron donor, via FMN and iron-sulfur (Fe-S) centers, to quinones in the respiratory and/or the photosynthetic chain. The immediate electron acceptor for the enzyme in this species is believed to be plastoquinone. Couples the redox reaction to proton translocation, and thus conserves the redox energy in a proton gradient. Cyanobacterial NDH-1 also plays a role in inorganic carbon-concentration. This chain is NAD(P)H-quinone oxidoreductase subunit M, found in Synechococcus sp. (strain WH7803).